The following is a 146-amino-acid chain: MSETFTKGMARNIYFGGSVFFFLVFLGLTYHTEQTFPERTNESEMTEAVVRGKEVWENNNCIGCHSLLGEGAYFAPELGNVFVRRGGEETFKPFLHAWMKAQPLGAPGRRAMPQFNLSEQQVDDMAEFLKWTSKIDTNDWPPNKEG.

A helical; Signal-anchor membrane pass occupies residues 13 to 29 (IYFGGSVFFFLVFLGLT). Positions 61, 64, and 65 each coordinate heme c.

In terms of assembly, heterodimer of cytochromes b (large subunit) and c (small subunit).

Its subcellular location is the cell membrane. Component of the anaerobic respiratory chain that transforms nitrate to dinitrogen (denitrification). The protein is Nitric oxide reductase subunit C (norC) of Stutzerimonas stutzeri (Pseudomonas stutzeri).